The following is a 55-amino-acid chain: Large ribosomal subunit protein bL33 (55 aa).

It belongs to the bacterial ribosomal protein bL33 family.

This chain is Large ribosomal subunit protein bL33, found in Gluconacetobacter diazotrophicus (strain ATCC 49037 / DSM 5601 / CCUG 37298 / CIP 103539 / LMG 7603 / PAl5).